A 318-amino-acid chain; its full sequence is tRNA uridine(34) hydroxylase (318 aa).

The Rhodanese domain maps to 123–217 (EDDDTVIIDA…YGKDPETKGE (95 aa)). Residue Cys177 is the Cysteine persulfide intermediate of the active site.

It belongs to the TrhO family.

The enzyme catalyses uridine(34) in tRNA + AH2 + O2 = 5-hydroxyuridine(34) in tRNA + A + H2O. Catalyzes oxygen-dependent 5-hydroxyuridine (ho5U) modification at position 34 in tRNAs. This chain is tRNA uridine(34) hydroxylase, found in Staphylococcus aureus (strain MSSA476).